Reading from the N-terminus, the 579-residue chain is Putative truncated flagellar export/assembly protein LfhA (579 aa).

The next 3 membrane-spanning stretches (helical) occupy residues Ala86–Phe106, Ile124–Ile144, and Phe177–Leu197.

Belongs to the FHIPEP (flagella/HR/invasion proteins export pore) family.

It localises to the cell inner membrane. In Escherichia coli (strain K12), this protein is Putative truncated flagellar export/assembly protein LfhA.